Reading from the N-terminus, the 64-residue chain is Lectin-A (64 aa).

2 Chitin-binding type-1 domains span residues 1-20 (APEC…QVVT) and 22-45 (DFDD…NTDA).

Post-translationally, glycosylated.

In terms of biological role, N-acetyl-D-glucosamine binding lectin. Shows low hemagglutinating activity towards human erythrocytes. Has low mitogenic activity towards human peripheral blood lymphocytes. The polypeptide is Lectin-A (Phytolacca americana (American pokeweed)).